A 337-amino-acid chain; its full sequence is DNA-directed RNA polymerase subunit alpha (337 aa).

Residues 1 to 233 form an alpha N-terminal domain (alpha-NTD) region; sequence MVREEIAEST…DLFVPFLHAE (233 aa). The interval 266-337 is alpha C-terminal domain (alpha-CTD); the sequence is GIPLKYIFID…FAVDLPKVLI (72 aa).

The protein belongs to the RNA polymerase alpha chain family. In terms of assembly, in plastids the minimal PEP RNA polymerase catalytic core is composed of four subunits: alpha, beta, beta', and beta''. When a (nuclear-encoded) sigma factor is associated with the core the holoenzyme is formed, which can initiate transcription.

The protein resides in the plastid. Its subcellular location is the chloroplast. The catalysed reaction is RNA(n) + a ribonucleoside 5'-triphosphate = RNA(n+1) + diphosphate. Its function is as follows. DNA-dependent RNA polymerase catalyzes the transcription of DNA into RNA using the four ribonucleoside triphosphates as substrates. The protein is DNA-directed RNA polymerase subunit alpha of Dioscorea elephantipes (Elephant's foot yam).